The chain runs to 176 residues: Dual specificity phosphatase 28 (176 aa).

Residues 17-159 (PPLVRVAPSL…LQKYEEALQA (143 aa)) form the Tyrosine-protein phosphatase domain. C103 functions as the Phosphocysteine intermediate in the catalytic mechanism.

The protein belongs to the protein-tyrosine phosphatase family. Non-receptor class dual specificity subfamily. Monomer.

It catalyses the reaction O-phospho-L-tyrosyl-[protein] + H2O = L-tyrosyl-[protein] + phosphate. The catalysed reaction is O-phospho-L-seryl-[protein] + H2O = L-seryl-[protein] + phosphate. It carries out the reaction O-phospho-L-threonyl-[protein] + H2O = L-threonyl-[protein] + phosphate. In terms of biological role, has phosphatase activity with the synthetic substrate 6,8-difluoro-4-methylumbelliferyl phosphate (in vitro). Has almost no detectable activity with phosphotyrosine, even less activity with phosphothreonine and displays complete lack of activity with phosphoserine. The poor activity with phosphotyrosine may be due to steric hindrance by bulky amino acid sidechains that obstruct access to the active site. In Homo sapiens (Human), this protein is Dual specificity phosphatase 28 (DUSP28).